The following is an 81-amino-acid chain: ATP synthase subunit c (81 aa).

2 helical membrane passes run isoleucine 5 to glycine 25 and valine 57 to alanine 77.

The protein belongs to the ATPase C chain family. In terms of assembly, F-type ATPases have 2 components, F(1) - the catalytic core - and F(0) - the membrane proton channel. F(1) has five subunits: alpha(3), beta(3), gamma(1), delta(1), epsilon(1). F(0) has three main subunits: a(1), b(2) and c(10-14). The alpha and beta chains form an alternating ring which encloses part of the gamma chain. F(1) is attached to F(0) by a central stalk formed by the gamma and epsilon chains, while a peripheral stalk is formed by the delta and b chains.

Its subcellular location is the cell membrane. Functionally, f(1)F(0) ATP synthase produces ATP from ADP in the presence of a proton or sodium gradient. F-type ATPases consist of two structural domains, F(1) containing the extramembraneous catalytic core and F(0) containing the membrane proton channel, linked together by a central stalk and a peripheral stalk. During catalysis, ATP synthesis in the catalytic domain of F(1) is coupled via a rotary mechanism of the central stalk subunits to proton translocation. Its function is as follows. Key component of the F(0) channel; it plays a direct role in translocation across the membrane. A homomeric c-ring of between 10-14 subunits forms the central stalk rotor element with the F(1) delta and epsilon subunits. The protein is ATP synthase subunit c of Mycobacterium bovis (strain ATCC BAA-935 / AF2122/97).